The following is a 305-amino-acid chain: Oxidoreductase swnR (305 aa).

Belongs to the NmrA-type oxidoreductase family. Isoflavone reductase subfamily.

The enzyme catalyses L-pipecolate + O2 = L-1-piperideine-6-carboxylate + H2O2 + H(+). It functions in the pathway mycotoxin biosynthesis. In terms of biological role, oxidoreductase; part of the gene cluster that mediates the biosynthesis of swainsonine (SW), a cytotoxic fungal alkaloid and a potential cancer therapy drug. Swainsonine production occurs via a multibranched pathway and is dispensable for fungal colonization of plants and infection of insect hosts. The first step of swainsonine biosynthesis is the production of the precursor pipecolic acid (PA) via conversion of L-lysine (Lys) to 1-piperideine-6-carboxylate (P6C) by the aminotransferase swnA, the latter being further reduced to PA by the reductase swnR. The PKS-NRPS hybrid synthetase swnK uptakes and condensates PA and malonyl-CoA with and without skipping of the ketoreductase (KR) domain in order to produce 3 intermediates, 1-oxoindolizidine, (1S)-1-hydroxyindolizin, and (1R)-1-hydroxyindolizine; with the transisomer (1S)-1-hydroxyindolizin being predominant. The terminal thioester reductase (TE) domain of swnK is involved in reduction of the thioester bond to release the intermediate aldehydes. The oxidoreductase swnN could contribute to the reduction of 1-oxoindolizidine to (1S)-1-hydroxyindolizin and (1R)-1-hydroxyindolizine, contributing to the major route of SW production. The dioxygenase swnH2 would be responsible for the oxidization of (1R)-1-hydroxyindolizine into (1R,2S)-1,2-dihydroxyindolizine and of (1S)-1-hydroxyindolizin to yield both (1R,2S)-1,2-dihydroxyindolizine and (1S,2S)-1,2-dihydroxyindolizine. The dioxygenase swnH1 then performs the conversion of the 1,2-dihydroxyindolizine epimers to SW. The protein is Oxidoreductase swnR of Arthroderma benhamiae (strain ATCC MYA-4681 / CBS 112371) (Trichophyton mentagrophytes).